The sequence spans 529 residues: Peptide chain release factor 3 (529 aa).

A tr-type G domain is found at 11–280 (AKRRTFAIIS…GLVAWAPAPM (270 aa)). GTP is bound by residues 20 to 27 (SHPDAGKT), 88 to 92 (DTPGH), and 142 to 145 (NKLD).

The protein belongs to the TRAFAC class translation factor GTPase superfamily. Classic translation factor GTPase family. PrfC subfamily.

The protein localises to the cytoplasm. Its function is as follows. Increases the formation of ribosomal termination complexes and stimulates activities of RF-1 and RF-2. It binds guanine nucleotides and has strong preference for UGA stop codons. It may interact directly with the ribosome. The stimulation of RF-1 and RF-2 is significantly reduced by GTP and GDP, but not by GMP. The protein is Peptide chain release factor 3 of Edwardsiella ictaluri (strain 93-146).